The chain runs to 150 residues: Catabolic 3-dehydroquinase (150 aa).

The Proton acceptor role is filled by Tyr-24. Residues Asn-75, His-81, and Asp-88 each contribute to the substrate site. His-101 serves as the catalytic Proton donor. Residues 102–103 and Arg-112 contribute to the substrate site; that span reads IS.

This sequence belongs to the type-II 3-dehydroquinase family. In terms of assembly, homododecamer. Adopts a ring-like structure, composed of an arrangement of two hexameric rings stacked on top of one another.

The catalysed reaction is 3-dehydroquinate = 3-dehydroshikimate + H2O. It participates in aromatic compound metabolism; 3,4-dihydroxybenzoate biosynthesis; 3,4-dihydroxybenzoate from 3-dehydroquinate: step 1/2. Functionally, is involved in the catabolism of quinate. Allows the utilization of quinate as carbon source via the beta-ketoadipate pathway. The protein is Catabolic 3-dehydroquinase of Verticillium alfalfae (strain VaMs.102 / ATCC MYA-4576 / FGSC 10136) (Verticillium wilt of alfalfa).